Consider the following 308-residue polypeptide: Quinolinate synthase (308 aa).

His24 and Ser41 together coordinate iminosuccinate. Cys86 contacts [4Fe-4S] cluster. Iminosuccinate is bound by residues 112–114 (YIN) and Ser129. Cys172 contributes to the [4Fe-4S] cluster binding site. Iminosuccinate-binding positions include 198-200 (HPE) and Thr215. Cys265 contributes to the [4Fe-4S] cluster binding site.

This sequence belongs to the quinolinate synthase family. Type 2 subfamily. Requires [4Fe-4S] cluster as cofactor.

It is found in the cytoplasm. The enzyme catalyses iminosuccinate + dihydroxyacetone phosphate = quinolinate + phosphate + 2 H2O + H(+). It participates in cofactor biosynthesis; NAD(+) biosynthesis; quinolinate from iminoaspartate: step 1/1. Catalyzes the condensation of iminoaspartate with dihydroxyacetone phosphate to form quinolinate. The protein is Quinolinate synthase of Sulfurihydrogenibium sp. (strain YO3AOP1).